We begin with the raw amino-acid sequence, 484 residues long: Tyramine receptor 1 (484 aa).

Residues 1 to 54 (MVRVELQAASLMNGSSAAEEPQDALVGGDACGGRRPPSVLGVRLAVPEWEVAVT) lie on the Extracellular side of the membrane. N13 carries an N-linked (GlcNAc...) asparagine glycan. Residues 55–77 (AVSLSLIILITIVGNVLVVLSVF) traverse the membrane as a helical segment. The Cytoplasmic segment spans residues 78–87 (TYKPLRIVQN). The helical transmembrane segment at 88–109 (FFIVSLAVADLTVAVLVMPFNV) threads the bilayer. Over 110–126 (AYSLIQRWVFGIVVCKM) the chain is Extracellular. A disulfide bridge connects residues C124 and C203. A helical transmembrane segment spans residues 127–147 (WLTCDVLCCTASILNLCAIAL). At 148–167 (DRYWAITDPINYAQKRTLRR) the chain is on the cytoplasmic side. Residues 168 to 190 (VLAMIAGVWLLSGVISSPPLIGW) form a helical membrane-spanning segment. The Extracellular portion of the chain corresponds to 191–215 (NDWPMEFNDTTPCQLTEEQGYVIYS). N198 carries an N-linked (GlcNAc...) asparagine glycan. A helical membrane pass occupies residues 216–237 (SLGSFFIPLFIMTIVYVEIFIA). The Cytoplasmic segment spans residues 238 to 411 (TKRRLRERAK…LSKERRAART (174 aa)). Positions 253-280 (SAMKQQMAAQAVPSSVPSHDQESVSSET) are enriched in polar residues. Disordered stretches follow at residues 253-322 (SAMK…PAMV) and 358-383 (TTTA…PTPV). Positions 295–306 (EKRRKTKKKSKK) are enriched in basic residues. A compositionally biased stretch (polar residues) spans 361–378 (AVTDSPRSRTASQKGSTA). Residues 412-433 (LGIIMGVFVVCWLPFFLMYVIV) form a helical membrane-spanning segment. Residues 434–448 (PFCNPSCKPSPKLVN) lie on the Extracellular side of the membrane. A helical transmembrane segment spans residues 449–470 (FITWLGYINSALNPIIYTIFNL). Over 471 to 484 (DFRRAFKKLLHFKT) the chain is Cytoplasmic.

It belongs to the G-protein coupled receptor 1 family. Present mainly in the central nervous system, especially in the supra- and subesophageal, thoracic and abdominal ganglia. Not found in the distal part of optic lobes.

The protein localises to the cell membrane. In terms of biological role, G-protein coupled receptor for tyramine, a known neurotransmitter and neuromodulator and direct precursor of octopamine. The rank order of potency for agonists of this receptor is tyramine &gt; naphazoline &gt; tolazoline &gt; DL-octopamine &gt; dopamine &gt; epinephrine &gt; 5-hydroxytryptamine. For antagonists, the rank order is yohimbine &gt; chlorpromazine &gt; mianserin &gt; phentolamine &gt; metoclopramide. The protein is Tyramine receptor 1 (GCR1) of Locusta migratoria (Migratory locust).